A 170-amino-acid chain; its full sequence is Lipoprotein signal peptidase (170 aa).

The next 4 membrane-spanning stretches (helical) occupy residues 11-31 (LGWLVLSLLVLVIDQVSKAHF), 41-61 (IVVIPDYFSWTLAYNTGAAFS), 69-89 (WQRWLFAVIAVVVSAVLVVWL), and 95-115 (DDTWLAIALALVLGGALGNLY). Residues Asp125 and Asp144 contribute to the active site. The chain crosses the membrane as a helical span at residues 136–156 (YFPAFNFADSAITVGAIMLAL).

The protein belongs to the peptidase A8 family.

It is found in the cell inner membrane. It catalyses the reaction Release of signal peptides from bacterial membrane prolipoproteins. Hydrolyzes -Xaa-Yaa-Zaa-|-(S,diacylglyceryl)Cys-, in which Xaa is hydrophobic (preferably Leu), and Yaa (Ala or Ser) and Zaa (Gly or Ala) have small, neutral side chains.. The protein operates within protein modification; lipoprotein biosynthesis (signal peptide cleavage). Its function is as follows. This protein specifically catalyzes the removal of signal peptides from prolipoproteins. The sequence is that of Lipoprotein signal peptidase from Pseudomonas fluorescens.